We begin with the raw amino-acid sequence, 154 residues long: Superoxide dismutase [Cu-Zn] (154 aa).

Residues His47, His49, and His64 each contribute to the Cu cation site. Cys58 and Cys147 are oxidised to a cystine. His64, His72, His81, and Asp84 together coordinate Zn(2+). Residue His121 participates in Cu cation binding. Positions 125–137 are enriched in basic and acidic residues; sequence DDLGRGGNEESKK. Residues 125 to 147 are disordered; the sequence is DDLGRGGNEESKKTGNAGPRPAC. A substrate-binding site is contributed by Arg144.

Belongs to the Cu-Zn superoxide dismutase family. As to quaternary structure, homodimer. Cu cation is required as a cofactor. The cofactor is Zn(2+).

The protein localises to the cytoplasm. The enzyme catalyses 2 superoxide + 2 H(+) = H2O2 + O2. Functionally, destroys radicals which are normally produced within the cells and which are toxic to biological systems. The polypeptide is Superoxide dismutase [Cu-Zn] (Aspergillus niger (strain ATCC MYA-4892 / CBS 513.88 / FGSC A1513)).